Consider the following 270-residue polypeptide: MTRFALTVVRHGETRLNKEKIIQGQGIDEPLSETGFKQAAAAGIFLKDVKFTHVFSSDLTRTKQTVHGILEKSKFCKDMTVKYDSRLRERKYGVAEGRPLSELRAMAKAAGEECPAFTPPGGETLDQLKRRGKDFFEFLCQLILKEAGQNEQFSQEAPSSCLESSLAEIFPLGKNCASTFNSDSGTPGLAASVLVVSHGAYIRSLLDYFLTDLKCSFPATLSRSELTSVSPNTGMTVFILNFEKGGKGRPTAQCVCVNLQGHLAGVNKTP.

His11 functions as the Tele-phosphohistidine intermediate in the catalytic mechanism. The residue at position 50 (Lys50) is an N6-acetyllysine. The active-site Proton donor/acceptor is the Glu89.

Belongs to the phosphoglycerate mutase family. Interacts with HK2; the interaction increases hexokinase HK2 activity in a hypoxia- and HIF1A-dependent manner, resulting in the regulation of mitochondrial membrane potential, thus increasing NADPH production and decreasing intracellular ROS levels.

The protein localises to the cytoplasm. The protein resides in the nucleus. It localises to the mitochondrion. It carries out the reaction beta-D-fructose 2,6-bisphosphate + H2O = beta-D-fructose 6-phosphate + phosphate. In terms of biological role, fructose-bisphosphatase hydrolyzing fructose-2,6-bisphosphate as well as fructose-1,6-bisphosphate. Acts as a negative regulator of glycolysis by lowering intracellular levels of fructose-2,6-bisphosphate in a p53/TP53-dependent manner, resulting in the pentose phosphate pathway (PPP) activation and NADPH production. Contributes to the generation of reduced glutathione to cause a decrease in intracellular reactive oxygen species (ROS) content, correlating with its ability to protect cells from oxidative or metabolic stress-induced cell death. Plays a role in promoting protection against cell death during hypoxia by decreasing mitochondria ROS levels in a HK2-dependent manner through a mechanism that is independent of its fructose-bisphosphatase activity. In response to cardiac damage stress, mediates p53-induced inhibition of myocyte mitophagy through ROS levels reduction and the subsequent inactivation of BNIP3. Reduced mitophagy results in an enhanced apoptotic myocyte cell death, and exacerbates cardiac damage. Plays a role in adult intestinal regeneration; contributes to the growth, proliferation and survival of intestinal crypts following tissue ablation. Plays a neuroprotective role against ischemic brain damage by enhancing PPP flux and preserving mitochondria functions. Protects glioma cells from hypoxia- and ROS-induced cell death by inhibiting glycolysis and activating mitochondrial energy metabolism and oxygen consumption in a TKTL1-dependent and p53/TP53-independent manner. Plays a role in cancer cell survival by promoting DNA repair through activating PPP flux in a CDK5-ATM-dependent signaling pathway during hypoxia and/or genome stress-induced DNA damage responses. Involved in intestinal tumor progression. The sequence is that of Fructose-2,6-bisphosphatase TIGAR from Bos taurus (Bovine).